The primary structure comprises 180 residues: Early nodulin-16 (180 aa).

The N-terminal stretch at 1–22 is a signal peptide; sequence MASSSPILLMIIFSMWLLISHS. A Phytocyanin domain is found at 25-129; that stretch reads TDYLIGDSHN…GLKLAVVVQN (105 aa). The N-linked (GlcNAc...) asparagine glycan is linked to asparagine 67. Cysteine 83 and cysteine 117 are disulfide-bonded. N-linked (GlcNAc...) asparagine glycosylation occurs at asparagine 152. A lipid anchor (GPI-anchor amidated serine) is attached at serine 154. The propeptide at 155-180 is removed in mature form; it reads GNKGGAAGLGFIMWLGVSLVMMMFLI.

The protein belongs to the early nodulin-like (ENODL) family. In terms of tissue distribution, expressed in developing nodules upon symbiosis with Sinorhizobium meliloti.

The protein localises to the symbiosome. Its subcellular location is the cell membrane. May act as a carbohydrate transporter. In Medicago truncatula (Barrel medic), this protein is Early nodulin-16.